A 764-amino-acid polypeptide reads, in one-letter code: Thyrotropin receptor (764 aa).

The signal sequence occupies residues 1 to 21 (MRPTPLLRLALLLVLPSSLWG). The Extracellular portion of the chain corresponds to 22–413 (ERCPSPPCEC…EFNPCEDIMG (392 aa)). C31 and C41 are disulfide-bonded. Residues 51-74 (PPSTQTLKFIETHLKTIPSRAFSN) form an LRR 1 repeat. N77 and N99 each carry an N-linked (GlcNAc...) asparagine glycan. LRR repeat units follow at residues 125-150 (LPLL…IYST), 152-174 (VFFI…AFQG), 176-199 (SNET…AFNG), 201-223 (KLDA…AFAG), and 225-248 (YSGP…GLEH). 2 N-linked (GlcNAc...) asparagine glycosylation sites follow: N177 and N198. The N-linked (GlcNAc...) asparagine glycan is linked to N302. Y385 carries the post-translational modification Sulfotyrosine. The chain crosses the membrane as a helical span at residues 414–441 (YKFLRIVVWFVSLLALLGNVFVLVILLT). The Cytoplasmic segment spans residues 442–450 (SHYKLTVPR). Residues 451 to 473 (FLMCNLAFADFCMGLYLLLIASV) form a helical membrane-spanning segment. The Extracellular segment spans residues 474–494 (DLYTQSEYYNHAIDWQTGPGC). Cysteines 494 and 569 form a disulfide. A helical membrane pass occupies residues 495 to 517 (NTAGFFTVFASELSVYTLTVITL). The Cytoplasmic portion of the chain corresponds to 518–537 (ERWYAITFAMHLDRKIRLWH). A helical transmembrane segment spans residues 538–560 (AYVIMLGGWVCCFLLALLPLVGI). Residues 561–580 (SSYAKVSICLPMDTETPLAL) lie on the Extracellular side of the membrane. A helical transmembrane segment spans residues 581–602 (AYIILVLLLNIIAFIIVCACYV). At 603–625 (KIYITVRNPHYNPGDKDTRIAKR) the chain is on the cytoplasmic side. Residues 626–649 (MAVLIFTDFMCMAPISFYALSALM) traverse the membrane as a helical segment. Residues 650-660 (NKPLITVTNSK) lie on the Extracellular side of the membrane. A helical membrane pass occupies residues 661–682 (ILLVLFYPLNSCANPFLYAIFT). Topologically, residues 683–764 (KAFQRDVFML…TSKEYKQTVL (82 aa)) are cytoplasmic. The short motif at 762 to 764 (TVL) is the PDZ-binding element.

The protein belongs to the G-protein coupled receptor 1 family. FSH/LSH/TSH subfamily. As to quaternary structure, interacts with heterodimer GPHA2:GPHB5; this interaction stimulates cAMP production. Interacts (via the PDZ-binding motif) with SCRIB; regulates TSHR trafficking and function. Post-translationally, glycosylated. Sulfated. Sulfation on Tyr-385 plays a role in thyrotropin receptor binding and activation.

It localises to the cell membrane. The protein resides in the basolateral cell membrane. In terms of biological role, receptor for the thyroid-stimulating hormone (TSH) or thyrotropin. Also acts as a receptor for the heterodimeric glycoprotein hormone (GPHA2:GPHB5) or thyrostimulin. The activity of this receptor is mediated by G proteins which activate adenylate cyclase. Plays a central role in controlling thyroid cell metabolism. The polypeptide is Thyrotropin receptor (TSHR) (Ovis aries (Sheep)).